A 379-amino-acid chain; its full sequence is Type II methyltransferase M.CvrRI (379 aa).

This sequence belongs to the N(4)/N(6)-methyltransferase family.

It carries out the reaction a 2'-deoxyadenosine in DNA + S-adenosyl-L-methionine = an N(6)-methyl-2'-deoxyadenosine in DNA + S-adenosyl-L-homocysteine + H(+). Its function is as follows. A gamma subtype methylase, recognizes the double-stranded sequence 5'-TGCA-3', methylates A-4 on both strands, and protects the DNA from cleavage by the CviRI endonuclease. The protein is Type II methyltransferase M.CvrRI (CVIRIM) of Chlorella (PBCV-XZ-6E).